Here is a 236-residue protein sequence, read N- to C-terminus: Large ribosomal subunit protein uL3 (236 aa).

The protein belongs to the universal ribosomal protein uL3 family. Part of the 50S ribosomal subunit. Forms a cluster with proteins L14 and L19.

In terms of biological role, one of the primary rRNA binding proteins, it binds directly near the 3'-end of the 23S rRNA, where it nucleates assembly of the 50S subunit. The chain is Large ribosomal subunit protein uL3 from Anaeromyxobacter dehalogenans (strain 2CP-1 / ATCC BAA-258).